The sequence spans 269 residues: ATP synthase subunit gamma, mitochondrial (269 aa).

In terms of assembly, F-type ATP synthases have 2 components, the catalytic core F(1) and the membrane-embedded component F(0), linked together by a central stalk and a peripheral stalk. The central stalk, also called rotor shaft, is often seen as part of F(1). The peripheral stalk is seen as part of F(0). F(0) contains the membrane channel next to the rotor. F-type ATP synthases form dimers but each monomer functions independently in ATP generation. The dimer consists of 18 different polypeptides: ATP1 (subunit alpha, part of F(1), 3 molecules per monomer), ATP2 (subunit beta, part of F(1), 3 molecules per monomer), ATP3 (subunit gamma, part of the central stalk), ATP4 (subunit b, part of the peripheral stalk), ATP5/OSCP (subunit 5/OSCP, part of the peripheral stalk), ATP6 (subunit a, part of the peripheral stalk), ATP7 (subunit d, part of the peripheral stalk), ATP8 (subunit 8, part of the peripheral stalk), OLI1 (subunit c, part of the rotor, 10 molecules per monomer), ATP14 (subunit h, part of the peripheral stalk), ATP15 (subunit epsilon, part of the central stalk), ATP16 (subunit delta, part of the central stalk), ATP17 (subunit f, part of the peripheral stalk), ATP18 (subunit i/j, part of the peripheral stalk). Dimer-specific subunits are ATP19 (subunit k, at interface between monomers), ATP20 (subunit g, at interface between monomers), TIM11 (subunit e, at interface between monomers). Also contains subunit L.

Its subcellular location is the mitochondrion inner membrane. Mitochondrial membrane ATP synthase (F(1)F(0) ATP synthase or Complex V) produces ATP from ADP in the presence of a proton gradient across the membrane which is generated by electron transport complexes of the respiratory chain. F-type ATP synthases consist of two structural domains, F(1) - containing the extramembraneous catalytic core, and F(0) - containing the membrane proton channel, linked together by a central stalk and a peripheral stalk. During catalysis, ATP synthesis in the catalytic domain of F(1) is coupled via a rotary mechanism of the central stalk subunits to proton translocation. Part of the complex F(1) domain and the central stalk which is part of the complex rotary element. The gamma/ATP3 subunit protrudes into the catalytic domain formed of alpha/ATP1(3)beta/ATP2(3). Rotation of the central stalk against the surrounding alpha/ATP1(3)beta/ATP2(3) subunits leads to hydrolysis of ATP in three separate catalytic sites on the beta/ATP2 subunits. The polypeptide is ATP synthase subunit gamma, mitochondrial (Pichia angusta (Yeast)).